The chain runs to 261 residues: 14-3-3 protein 9 (261 aa).

The segment at 239-261 (PEDAEDAQKGDATNKAGGGEDAE) is disordered.

Belongs to the 14-3-3 family. In terms of assembly, homodimer.

This is 14-3-3 protein 9 (TFT9) from Solanum lycopersicum (Tomato).